The following is a 258-amino-acid chain: MGKYNFTALRVRQTALRQHAAGKIRAPPKWLDVVADIPPAQVLVRNQAPQHQLVRQRVKTLPGTSKPQVVFEVQEKRIKPKKASRMFLPTEIKYEEDQLRQEFFRDHPWELARPRVLVESTGKDSEHYDWSRLQQPGKRLDGESVVQRQLWLLNNVPDMTKSAAYDIARCEFYRLRLQEDIERRVAAEEAEATGATFGPSLLEVGMELENQEYERWKAWAKMEAQLLDQKTAAFTGAPEIAAADDAVEELEEKVPVPV.

Belongs to the mitochondrion-specific ribosomal protein mS23 family. In terms of assembly, component of the mitochondrial small ribosomal subunit.

The protein localises to the mitochondrion. This is Small ribosomal subunit protein mS23 (rsm25) from Aspergillus fumigatus (strain ATCC MYA-4609 / CBS 101355 / FGSC A1100 / Af293) (Neosartorya fumigata).